The following is a 39-amino-acid chain: U1-ectatotoxin-Et1b subunit A (39 aa).

A disulfide bond links cysteine 14 and cysteine 35.

The protein belongs to the ectatomin family. Ectatomin-Et subfamily. In terms of assembly, heterodimer of subunits A and B; disulfide-linked. Expressed by the venom gland.

It localises to the secreted. The protein resides in the target cell membrane. In Ectatomma tuberculatum (Selva ant), this protein is U1-ectatotoxin-Et1b subunit A.